A 233-amino-acid chain; its full sequence is Small ribosomal subunit protein uS2 (233 aa).

Belongs to the universal ribosomal protein uS2 family.

This is Small ribosomal subunit protein uS2 from Clostridium botulinum (strain Eklund 17B / Type B).